Here is a 253-residue protein sequence, read N- to C-terminus: MEQFKGLQKSLYIWTDNAELDKRVEQLKTATGGEVALENVHRLSFASYASSSFDLIVIECAQLTDNYVKLLHMLKPSGKLHLISFIGAAGSLLQEIKLSGFINCSEDSDNTLTAEKPGYETGSSARLSFAKKNSSTLNVWKISGDDDELIDEEDLLDEVDKQKPDPASLKVCSTTGKRKACKNCSCGLADELENEKKQENAAKQASTENAKSSCGNCYLGDAFRCSSCPYLGMPAFKPGEKVQLVDNLLKSDI.

An N-terminal SAM-like domain region spans residues 4–129; sequence FKGLQKSLYI…ETGSSARLSF (126 aa). The tract at residues 130 to 161 is linker; it reads AKKNSSTLNVWKISGDDDELIDEEDLLDEVDK. Cys172, Cys181, Cys184, and Cys186 together coordinate [2Fe-2S] cluster. Residues 172 to 186 form a fe-S binding site A region; the sequence is CSTTGKRKACKNCSC. [4Fe-4S] cluster contacts are provided by Cys214, Cys217, Cys225, and Cys228. 2 consecutive short sequence motifs (cx2C motif) follow at residues 214–217 and 225–228; these read CGNC and CSSC. The interval 214–228 is fe-S binding site B; it reads CGNCYLGDAFRCSSC.

This sequence belongs to the anamorsin family. As to quaternary structure, monomer. [2Fe-2S] cluster is required as a cofactor. It depends on [4Fe-4S] cluster as a cofactor.

The protein resides in the cytoplasm. It is found in the mitochondrion intermembrane space. In terms of biological role, component of the cytosolic iron-sulfur (Fe-S) protein assembly (CIA) machinery. Required for the maturation of extramitochondrial Fe-S proteins. Part of an electron transfer chain functioning in an early step of cytosolic Fe-S biogenesis, facilitating the de novo assembly of a [4Fe-4S] cluster on the cytosolic Fe-S scaffold complex. Electrons are transferred from NADPH via a FAD- and FMN-containing diflavin oxidoreductase. Together with the diflavin oxidoreductase, also required for the assembly of the diferric tyrosyl radical cofactor of ribonucleotide reductase (RNR), probably by providing electrons for reduction during radical cofactor maturation in the catalytic small subunit. This chain is Anamorsin homolog, found in Drosophila willistoni (Fruit fly).